The primary structure comprises 450 residues: Cyclic GMP-AMP phosphodiesterase SMPDL3A (450 aa).

The signal sequence occupies residues Met1–Gly22. 2 residues coordinate Zn(2+): Asp42 and His44. Cys59 and Cys78 are joined by a disulfide. Asp107 is a binding site for Zn(2+). His111 contacts ATP. N-linked (GlcNAc...) asparagine glycans are attached at residues Asn124 and Asn128. Asn148 lines the Zn(2+) pocket. ATP contacts are provided by Asn148 and His149. 2 N-linked (GlcNAc...) asparagine glycosylation sites follow: Asn219 and Asn235. Residues His249, His290, and His292 each coordinate Zn(2+). N-linked (GlcNAc...) asparagine glycosylation is found at Asn353 and Asn370. Intrachain disulfides connect Cys417–Cys421 and Cys427–Cys440.

The protein belongs to the acid sphingomyelinase family. As to quaternary structure, monomer. Homodimer; homodimerizes following 2',3'-cGAMP-binding. Zn(2+) serves as cofactor.

Its subcellular location is the secreted. It catalyses the reaction 2',3'-cGAMP + H2O = 5'-pGpA(2'-5') + H(+). The enzyme catalyses 5'-pGpA(2'-5') + H2O = 5'-GpA(2'-5') + phosphate. The catalysed reaction is a ribonucleoside 5'-triphosphate + H2O = a ribonucleoside 5'-diphosphate + phosphate + H(+). It carries out the reaction ATP + H2O = ADP + phosphate + H(+). Its function is as follows. Cyclic-nucleotide phosphodiesterase that acts as a negative regulator of innate immunity by mediating degradation of 2',3'-cGAMP, thereby inhibiting the cGAS-STING signaling. Specifically linearizes 2',3'-cGAMP into 2'5'-bond pGpA and further hydrolyzes pGpA to produce GpA. Also has in vitro nucleotide phosphodiesterase activity with nucleoside triphosphates, such as ATP. Has in vitro activity with p-nitrophenyl-TMP. Has lower activity with nucleoside diphosphates, and no activity with nucleoside monophosphates. Has in vitro activity with CDP-choline, giving rise to CMP and phosphocholine. Has in vitro activity with CDP-ethanolamine. Does not have sphingomyelin phosphodiesterase activity. This chain is Cyclic GMP-AMP phosphodiesterase SMPDL3A (SMPDL3A), found in Bos taurus (Bovine).